Reading from the N-terminus, the 310-residue chain is Tyrosine recombinase XerC (310 aa).

One can recognise a Core-binding (CB) domain in the interval N11–V97. The region spanning P118–D298 is the Tyr recombinase domain. Catalysis depends on residues R157, K181, H250, R253, and H276. The active-site O-(3'-phospho-DNA)-tyrosine intermediate is the Y285.

The protein belongs to the 'phage' integrase family. XerC subfamily. Forms a cyclic heterotetrameric complex composed of two molecules of XerC and two molecules of XerD.

The protein resides in the cytoplasm. Site-specific tyrosine recombinase, which acts by catalyzing the cutting and rejoining of the recombining DNA molecules. The XerC-XerD complex is essential to convert dimers of the bacterial chromosome into monomers to permit their segregation at cell division. It also contributes to the segregational stability of plasmids. This chain is Tyrosine recombinase XerC, found in Vibrio atlanticus (strain LGP32) (Vibrio splendidus (strain Mel32)).